We begin with the raw amino-acid sequence, 148 residues long: Deoxyuridine 5'-triphosphate nucleotidohydrolase (148 aa).

Substrate is bound by residues 67-69, asparagine 80, 84-86, and methionine 94; these read RSG and LID.

This sequence belongs to the dUTPase family. Mg(2+) serves as cofactor.

The enzyme catalyses dUTP + H2O = dUMP + diphosphate + H(+). It participates in pyrimidine metabolism; dUMP biosynthesis; dUMP from dCTP (dUTP route): step 2/2. In terms of biological role, this enzyme is involved in nucleotide metabolism: it produces dUMP, the immediate precursor of thymidine nucleotides and it decreases the intracellular concentration of dUTP so that uracil cannot be incorporated into DNA. The chain is Deoxyuridine 5'-triphosphate nucleotidohydrolase from Burkholderia mallei (strain NCTC 10247).